The sequence spans 186 residues: Ribosome-recycling factor (186 aa).

This sequence belongs to the RRF family.

It is found in the cytoplasm. Functionally, responsible for the release of ribosomes from messenger RNA at the termination of protein biosynthesis. May increase the efficiency of translation by recycling ribosomes from one round of translation to another. In Methylibium petroleiphilum (strain ATCC BAA-1232 / LMG 22953 / PM1), this protein is Ribosome-recycling factor.